A 357-amino-acid chain; its full sequence is MAWEHLRVTDTPTWPSILGRLTTGQNLGTGQAAWAMDQIMTGTATPAQIAGFAVAMKLKRPTSAEVTELADVMLKHARRIPTDVIGNETVDIVGTGGDGANTVNLSTMAAIVVAAAGVPVMKHGNRAASSLSGGADTLEALGVRIDLGPEQVAASVAEVGIGFAFANQFHPSYKHASAVRRELGVPTVFNLLGPLTNPARPRAGLIGCAWAELAEVMAGVFASRNSSVLVVHGDDGLDELTTTTTSTIWRVQAGTVERLTFDPAAFGFQRAHLSELVGGDAEYNAAEVRAVLGGAKGAVRDAVVLNAAGALVAHAGLSSDAKWVPAWEAGLARATETIDSGAAEKLLARWVRFTQKL.

5-phospho-alpha-D-ribose 1-diphosphate-binding positions include Gly-94, 97 to 98 (GD), Thr-102, 104 to 107 (NLST), 122 to 130 (KHGNRAASS), and Gly-134. Residue Gly-94 coordinates anthranilate. Ser-106 lines the Mg(2+) pocket. Asn-125 provides a ligand contact to anthranilate. Residue Arg-180 participates in anthranilate binding. The Mg(2+) site is built by Asp-238 and Glu-239.

Belongs to the anthranilate phosphoribosyltransferase family. Homodimer. Mg(2+) is required as a cofactor.

It carries out the reaction N-(5-phospho-beta-D-ribosyl)anthranilate + diphosphate = 5-phospho-alpha-D-ribose 1-diphosphate + anthranilate. It participates in amino-acid biosynthesis; L-tryptophan biosynthesis; L-tryptophan from chorismate: step 2/5. In terms of biological role, catalyzes the transfer of the phosphoribosyl group of 5-phosphorylribose-1-pyrophosphate (PRPP) to anthranilate to yield N-(5'-phosphoribosyl)-anthranilate (PRA). This Mycobacterium sp. (strain JLS) protein is Anthranilate phosphoribosyltransferase.